A 147-amino-acid polypeptide reads, in one-letter code: Putative cystatin-9-like protein CST9LP1 (147 aa).

An N-terminal signal peptide occupies residues 1 to 28 (MWSLPPSRALSCAPLLLLFSFQFLVTYA). C98 and C108 are oxidised to a cystine. Residues N117 and N139 are each glycosylated (N-linked (GlcNAc...) asparagine). A disulfide bridge connects residues C122 and C142.

It belongs to the cystatin family.

It is found in the secreted. This is Putative cystatin-9-like protein CST9LP1 (CST9LP1) from Homo sapiens (Human).